A 417-amino-acid polypeptide reads, in one-letter code: Phosphatidylcholine:ceramide cholinephosphotransferase 1 (417 aa).

Residues 11–74 form the SAM domain; sequence WSPEEVTNWL…LHMIETLKMA (64 aa). The next 5 membrane-spanning stretches (helical) occupy residues 140–160, 188–208, 219–239, 280–300, and 308–328; these read FLAF…ISVV, FSIC…QWLL, FFCI…VTTL, MCGD…YLFI, and LWWY…CILL. His-289 is an active-site residue. Residues 329-417 are Cytoplasmic-facing; it reads AHDHYTVDVV…VKYSRLVNDT (89 aa). Residues His-332 and Asp-336 contribute to the active site.

The protein belongs to the sphingomyelin synthase family.

Its subcellular location is the golgi apparatus membrane. The enzyme catalyses an N-acylsphing-4-enine + a 1,2-diacyl-sn-glycero-3-phosphocholine = a sphingomyelin + a 1,2-diacyl-sn-glycerol. The catalysed reaction is an N-acylsphing-4-enine + a 1,2-diacyl-sn-glycero-3-phosphoethanolamine = an N-acylsphing-4-enine 1-phosphoethanolamine + a 1,2-diacyl-sn-glycerol. Functionally, major sphingomyelin synthase at the Golgi apparatus. Catalyzes the reversible transfer of phosphocholine moiety in sphingomyelin biosynthesis: in the forward reaction transfers phosphocholine head group of phosphatidylcholine (PC) on to ceramide (CER) to form ceramide phosphocholine (sphingomyelin, SM) and diacylglycerol (DAG) as by-product, and in the reverse reaction transfers phosphocholine from SM to DAG to form PC and CER. The direction of the reaction depends on the levels of CER and DAG in Golgi membranes. Converts the newly synthesized CER, that is transported from the endoplasmic reticulum to the trans-Golgi by the Cer transport protein (CERT), to SM. Can form a heteromeric complex with glucosylceramide synthase (GCS) increasing SMS activity and reducing glucosylceramide synthesis, a critical mechanism that controls the metabolic fate of CER in the Golgi. Does not use free phosphorylcholine or CDP-choline as donor. Can also transfer phosphoethanolamine head group of phosphatidylethanolamine (PE) on to CER to form ceramide phosphoethanolamine (CPE). Regulates receptor-mediated signal transduction via mitogenic DAG and proapoptotic CER, as well as via SM, a structural component of membrane rafts that serve as platforms for signal transduction and protein sorting. Plays a role in secretory transport via regulation of DAG pool at the Golgi apparatus and its downstream effects on PRKD1. This is Phosphatidylcholine:ceramide cholinephosphotransferase 1 (SGMS1) from Gallus gallus (Chicken).